Reading from the N-terminus, the 336-residue chain is Probable tRNA pseudouridine synthase B (336 aa).

The active-site Nucleophile is the Asp81. Positions 248-323 (LKKVVVKDSA…VAVDVERVYM (76 aa)) constitute a PUA domain.

The protein belongs to the pseudouridine synthase TruB family. Type 2 subfamily.

It catalyses the reaction uridine(55) in tRNA = pseudouridine(55) in tRNA. Could be responsible for synthesis of pseudouridine from uracil-55 in the psi GC loop of transfer RNAs. The sequence is that of Probable tRNA pseudouridine synthase B from Methanocaldococcus jannaschii (strain ATCC 43067 / DSM 2661 / JAL-1 / JCM 10045 / NBRC 100440) (Methanococcus jannaschii).